We begin with the raw amino-acid sequence, 130 residues long: Glycine cleavage system H protein (130 aa).

Residues 22–103 enclose the Lipoyl-binding domain; it reads KAYIGISDCA…PYGSWIAAIE (82 aa). Lys63 is subject to N6-lipoyllysine.

Belongs to the GcvH family. In terms of assembly, the glycine cleavage system is composed of four proteins: P, T, L and H. (R)-lipoate serves as cofactor.

The glycine cleavage system catalyzes the degradation of glycine. The H protein shuttles the methylamine group of glycine from the P protein to the T protein. This chain is Glycine cleavage system H protein, found in Clostridium botulinum (strain ATCC 19397 / Type A).